Consider the following 161-residue polypeptide: S-protein homolog 2 (161 aa).

The first 24 residues, 1–24 (MDIPKQYLSLFILIIFITTKLSQA), serve as a signal peptide directing secretion. N-linked (GlcNAc...) asparagine glycans are attached at residues Asn75, Asn106, and Asn157.

Belongs to the plant self-incompatibility (S1) protein family.

The protein resides in the secreted. The protein is S-protein homolog 2 of Arabidopsis thaliana (Mouse-ear cress).